A 448-amino-acid polypeptide reads, in one-letter code: MREIIHLQTGQCLIQGNQVGTAFWQTIHHEHGLDHDGYFRGESTQQSDRLSVYFAEASNNKYVPRAVLVDLEPATMDAIRSGPLGNFFRPDNMVHGQSGAGNNWAKGHYTEGAELVDQVLDVVRREAETCDSLQGFQITHSLGGGTGSGMGTLLIAKVREEFPDRMMATFSVLPSPKVSEVVVEPYNATLSVHQLVENSDETFCIDNEALYDICRRTLKQAHPSYGDLNKLVSRVMSGLTTGFRFPGQLNADLRKLAVNLVPFPRLHFFTVGFAPLTTAAAYQNLGVAELTQQMFDPKNVMSASDFRNGRFLTCSAIYRGKVSTKQIEEQIRGVQAKNSAYFVEWIPNNVQTAHCSIPPVGMNASSTFIGNSTAIQDIFRRVGDQFSVMFRRKAFLHWYTGEGMDEMEFTEAESNMNDLVSEYQQYQDAGMDDDEAEEAYEEEEPVEE.

8 residues coordinate GTP: Gln11, Glu72, Ser141, Gly145, Thr146, Gly147, Asn207, and Asn229. Glu72 is a Mg(2+) binding site. The tract at residues 424–448 is disordered; it reads QQYQDAGMDDDEAEEAYEEEEPVEE. The span at 430–448 shows a compositional bias: acidic residues; sequence GMDDDEAEEAYEEEEPVEE.

Belongs to the tubulin family. Dimer of alpha and beta chains. A typical microtubule is a hollow water-filled tube with an outer diameter of 25 nm and an inner diameter of 15 nM. Alpha-beta heterodimers associate head-to-tail to form protofilaments running lengthwise along the microtubule wall with the beta-tubulin subunit facing the microtubule plus end conferring a structural polarity. Microtubules usually have 13 protofilaments but different protofilament numbers can be found in some organisms and specialized cells. The cofactor is Mg(2+).

The protein resides in the cytoplasm. Its subcellular location is the cytoskeleton. In terms of biological role, tubulin is the major constituent of microtubules, a cylinder consisting of laterally associated linear protofilaments composed of alpha- and beta-tubulin heterodimers. Microtubules grow by the addition of GTP-tubulin dimers to the microtubule end, where a stabilizing cap forms. Below the cap, tubulin dimers are in GDP-bound state, owing to GTPase activity of alpha-tubulin. The protein is Tubulin beta-1 chain (TUB1) of Colletotrichum gloeosporioides (Anthracnose fungus).